We begin with the raw amino-acid sequence, 544 residues long: MAVDTEKDSVQAGSPMETPGSPVDETTEPVVTSKTWIVSMILSCGYGLSFWPIPVVSAIGTMISADMGDPTGYIWTLCKETNPIIGMDYLDHLCFLDLVCFIGHIVVASAKSTNQVIAGLVVSGFGGANCQMAAFALPELLPNKWRHIGVVIADLTVYIAVIIAPVTARYGYELGTWAWNFWGVAIFQGLSFFGLLFLYHPPKHPLGIPYKEAFKSLDYLGAFLFIGGAVPFLMGIVWAGVYDSNDVHVVAPLVVGAAVLVCFALWESFGKLKYPLTPTYVFASSWGRDFTAPVIALGVVNMFYYSSSILWPQMITVFYTNGGADWKYSVILSLPQGFAIFFGAMLLTCFGSKLRHWHWQLTGSVFVMVVFGSLLGIVTPTNKGTMIAFIFLSQAGFGWALYLSIAITQMGVEHKNLGVSGGISGCIRFAAGAVATSIYQTVYSNSLAKYTAIYVPSAAISAGLPESKVTDLMAVVSQGAAAMKSYSPAVVAAAEAALSQAYCKAIFVVAMVSMAFGILGLAACLCCKDVDSKMTNKPTIIRRD.

The disordered stretch occupies residues 1 to 28 (MAVDTEKDSVQAGSPMETPGSPVDETTE). 13 helical membrane passes run 36-56 (WIVS…IPVV), 90-110 (LDHL…VASA), 116-136 (VIAG…AAFA), 148-168 (IGVV…PVTA), 178-198 (AWNF…LLFL), 221-241 (GAFL…WAGV), 249-269 (VVAP…WESF), 290-310 (FTAP…SSIL), 330-350 (VILS…LTCF), 361-381 (LTGS…VTPT), 387-407 (IAFI…SIAI), 418-438 (GVSG…ATSI), and 505-525 (AIFV…AACL).

It belongs to the major facilitator superfamily.

The protein localises to the cell membrane. Its function is as follows. MFS-type transporter; part of the gene cluster that mediates the biosynthesis of PR-toxin, a bicyclic sesquiterpene belonging to the eremophilane class and acting as a mycotoxin. The chain is MFS-type transporter prx5 from Penicillium rubens (strain ATCC 28089 / DSM 1075 / NRRL 1951 / Wisconsin 54-1255) (Penicillium chrysogenum).